The sequence spans 651 residues: Intraflagellar transport protein 70A (651 aa).

TPR repeat units follow at residues 8–41 (DGEY…HTKS), 42–75 (RAAL…HPEV), 140–173 (PDYD…LGYQ), 175–207 (DLAY…GIRE), 379–410 (VTKQ…EKYI), 411–443 (PVLM…CNEH), and 445–478 (TWKL…HYEN). Residues 494 to 521 (YIMTSQNEEAEELMRKIEKEEEQISYDD) are a coiled coil. One copy of the TPR 8 repeat lies at 530 to 563 (CIVNLVIGTLYCAKGNYDFGISRVIKSLEPYNKK).

The protein belongs to the TTC30/dfy-1/fleer family. In terms of tissue distribution, localizes to the cilia of many ciliated epithelial cell types including pronephric cells, olfactory placode, the brain ventricle and lateral line organs.

It is found in the cell projection. It localises to the cilium. In terms of biological role, plays a role in anterograde intraflagellar transport (IFT), the process by which cilia precursors are transported from the base of the cilium to the site of their incorporation at the tip. Required for polyglutamylation of axonemal tubulin, which is a prerequisite for correct assembly of cilia and for normal cilia beat amplitude. Does not seem to be required for neuronal microtubule polyglutamylation. This chain is Intraflagellar transport protein 70A (ift70a), found in Danio rerio (Zebrafish).